The chain runs to 222 residues: Octanoyltransferase (222 aa).

Residues 34–214 (GEAPSTVLLL…EFRKHEEALV (181 aa)) form the BPL/LPL catalytic domain. Residues 72-79 (RGGKLTWH), 144-146 (AIG), and 157-159 (GVA) each bind substrate. Cys175 (acyl-thioester intermediate) is an active-site residue.

The protein belongs to the LipB family.

The protein localises to the cytoplasm. It catalyses the reaction octanoyl-[ACP] + L-lysyl-[protein] = N(6)-octanoyl-L-lysyl-[protein] + holo-[ACP] + H(+). It participates in protein modification; protein lipoylation via endogenous pathway; protein N(6)-(lipoyl)lysine from octanoyl-[acyl-carrier-protein]: step 1/2. Catalyzes the transfer of endogenously produced octanoic acid from octanoyl-acyl-carrier-protein onto the lipoyl domains of lipoate-dependent enzymes. Lipoyl-ACP can also act as a substrate although octanoyl-ACP is likely to be the physiological substrate. The chain is Octanoyltransferase from Pseudarthrobacter chlorophenolicus (strain ATCC 700700 / DSM 12829 / CIP 107037 / JCM 12360 / KCTC 9906 / NCIMB 13794 / A6) (Arthrobacter chlorophenolicus).